The chain runs to 265 residues: Hydroxyethylthiazole kinase (265 aa).

Met-36 provides a ligand contact to substrate. ATP contacts are provided by Lys-112 and Ser-160. Gly-187 lines the substrate pocket.

This sequence belongs to the Thz kinase family. Requires Mg(2+) as cofactor.

The enzyme catalyses 5-(2-hydroxyethyl)-4-methylthiazole + ATP = 4-methyl-5-(2-phosphooxyethyl)-thiazole + ADP + H(+). Its pathway is cofactor biosynthesis; thiamine diphosphate biosynthesis; 4-methyl-5-(2-phosphoethyl)-thiazole from 5-(2-hydroxyethyl)-4-methylthiazole: step 1/1. In terms of biological role, catalyzes the phosphorylation of the hydroxyl group of 4-methyl-5-beta-hydroxyethylthiazole (THZ). This is Hydroxyethylthiazole kinase from Clostridium perfringens (strain ATCC 13124 / DSM 756 / JCM 1290 / NCIMB 6125 / NCTC 8237 / Type A).